The primary structure comprises 556 residues: Potassium-transporting ATPase potassium-binding subunit (556 aa).

10 helical membrane-spanning segments follow: residues 6–26 (AGIL…VPLG), 65–85 (SVLA…LLQG), 133–153 (GLSV…MAFV), 176–196 (LRIL…GGVI), 249–269 (PTTW…FSLP), 283–303 (AAIL…MMLF), 378–398 (GLYS…LMVG), 419–439 (YFLV…ALPG), 483–503 (ALGL…LALA), and 526–546 (FVGM…LPVL).

This sequence belongs to the KdpA family. The system is composed of three essential subunits: KdpA, KdpB and KdpC.

The protein resides in the cell membrane. Its function is as follows. Part of the high-affinity ATP-driven potassium transport (or Kdp) system, which catalyzes the hydrolysis of ATP coupled with the electrogenic transport of potassium into the cytoplasm. This subunit binds the extracellular potassium ions and delivers the ions to the membrane domain of KdpB through an intramembrane tunnel. This is Potassium-transporting ATPase potassium-binding subunit from Mycobacterium sp. (strain KMS).